A 485-amino-acid polypeptide reads, in one-letter code: uncharacterized protein (485 aa).

The signal sequence occupies residues 1-23; that stretch reads MRRRVCTVVRAVVCLLSTSLLTT. Residue C24 is the site of N-palmitoyl cysteine attachment. C24 is lipidated: S-diacylglycerol cysteine. Positions 308–327 are enriched in low complexity; the sequence is SAASSPAQCPSSPSSSSSSS. Residues 308 to 331 are disordered; sequence SAASSPAQCPSSPSSSSSSSTNAG.

The protein belongs to the TP013X lipoprotein family.

The protein localises to the cell membrane. This is an uncharacterized protein from Treponema pallidum (strain Nichols).